Here is a 526-residue protein sequence, read N- to C-terminus: Probable feruloyl esterase B (526 aa).

The first 18 residues, 1 to 18, serve as a signal peptide directing secretion; it reads MARLSLLTLLALGSAALA. 2 cysteine pairs are disulfide-bonded: cysteine 27/cysteine 74 and cysteine 62/cysteine 113. Asparagine 137 carries N-linked (GlcNAc...) asparagine glycosylation. Intrachain disulfides connect cysteine 186-cysteine 441, cysteine 255-cysteine 272, cysteine 281-cysteine 291, and cysteine 503-cysteine 525. Serine 187 functions as the Acyl-ester intermediate in the catalytic mechanism. Residue asparagine 233 is glycosylated (N-linked (GlcNAc...) asparagine). Ca(2+) is bound by residues aspartate 256, aspartate 259, alanine 261, aspartate 263, and isoleucine 265. Asparagine 311 carries an N-linked (GlcNAc...) asparagine glycan. Active-site charge relay system residues include aspartate 400 and histidine 440. An N-linked (GlcNAc...) asparagine glycan is attached at asparagine 516.

Belongs to the tannase family.

The protein localises to the secreted. It catalyses the reaction feruloyl-polysaccharide + H2O = ferulate + polysaccharide.. Its function is as follows. Involved in degradation of plant cell walls. Hydrolyzes the feruloyl-arabinose ester bond in arabinoxylans as well as the feruloyl-galactose and feruloyl-arabinose ester bonds in pectin. This Aspergillus clavatus (strain ATCC 1007 / CBS 513.65 / DSM 816 / NCTC 3887 / NRRL 1 / QM 1276 / 107) protein is Probable feruloyl esterase B (faeB).